Consider the following 477-residue polypeptide: Calcium/calmodulin-dependent protein kinase type 1G (477 aa).

One can recognise a Protein kinase domain in the interval 23–277; sequence FIFMEVLGSG…CEKALRHPWI (255 aa). ATP contacts are provided by residues 29-37 and K52; that span reads LGSGAFSEV. Catalysis depends on D143, which acts as the Proton acceptor. The autoinhibitory domain stretch occupies residues 277–317; sequence IDGNTALHRDIYPSVSLQIQKNFAKSKWRQAFNAAAVVHHM. The calmodulin-binding stretch occupies residues 297 to 318; sequence KNFAKSKWRQAFNAAAVVHHMR. Positions 326 to 388 are disordered; sequence SPSVRQEVEN…SRPSAPSGGR (63 aa). Positions 376–388 are enriched in low complexity; the sequence is SHSSRPSAPSGGR.

This sequence belongs to the protein kinase superfamily. CAMK Ser/Thr protein kinase family. CaMK subfamily. Post-translationally, may be prenylated on Cys-474. In terms of tissue distribution, highly expressed in brain, in neuronal cell bodies of the central nucleus of amygdala and ventromedial hypothalamic nucleus. Also detected in heart, testis, and kidney.

It localises to the cytoplasm. It is found in the golgi apparatus membrane. Its subcellular location is the cell membrane. It carries out the reaction L-seryl-[protein] + ATP = O-phospho-L-seryl-[protein] + ADP + H(+). The catalysed reaction is L-threonyl-[protein] + ATP = O-phospho-L-threonyl-[protein] + ADP + H(+). With respect to regulation, activated by Ca(2+)/calmodulin. Binding of calmodulin is thought to result in a conformational change and leads to activation through phosphorylation by CAMKK1. In terms of biological role, calcium/calmodulin-dependent protein kinase belonging to a proposed calcium-triggered signaling cascade. In vitro phosphorylates transcription factor CREB1. The sequence is that of Calcium/calmodulin-dependent protein kinase type 1G (Camk1g) from Mus musculus (Mouse).